We begin with the raw amino-acid sequence, 220 residues long: Phosphopantothenoylcysteine decarboxylase (220 aa).

FMN is bound by residues 29 to 31 (GSV) and 54 to 56 (TKA). His91 serves as the catalytic Proton donor. FMN-binding positions include 107–110 (SANT) and Ala141. Residues Asn143, Arg173, and Ala175 each coordinate N-[(R)-4-phosphopantothenoyl]-L-cysteine. Residue Cys176 is the Proton donor of the active site. Met184 provides a ligand contact to N-[(R)-4-phosphopantothenoyl]-L-cysteine.

Belongs to the HFCD (homooligomeric flavin containing Cys decarboxylase) superfamily. Forms homotrimers. Interacts with HIP1. Interacts with HD1 in the dark. The cofactor is FMN. As to expression, expressed in root meristem, shoot apical meristem (SAM), intercalary meristem, floral meristem, embryo and tip of the coleoptile before true leaf emergence.

The protein localises to the nucleus. It catalyses the reaction N-[(R)-4-phosphopantothenoyl]-L-cysteine + H(+) = (R)-4'-phosphopantetheine + CO2. It functions in the pathway cofactor biosynthesis; coenzyme A biosynthesis; CoA from (R)-pantothenate: step 3/5. Functionally, catalyzes the decarboxylation of 4'-phosphopantothenoylcysteine to 4'-phosphopantetheine, a key step in coenzyme A biosynthesis. Involved in salt and osmotic tolerance, and light-regulated plant growth. Trimerization of HAL3 recruits and activates the E3 ubiquitin-protein ligase HIP1, which leads to the degradation of cell cycle suppressors, resulting in enhancement of cell division and plant growth. HAL3 function in cell division seems to be independent from its PPC decarboxylase activity. Acts as a positive regulator of flowering by binding to HD1 in the dark. This Oryza sativa subsp. japonica (Rice) protein is Phosphopantothenoylcysteine decarboxylase.